The chain runs to 859 residues: Envelope glycoprotein gp160 (859 aa).

The signal sequence occupies residues 1-23; that stretch reads MAYFSSRLPIALLLIGISGFVCK. Residues 24–678 lie on the Extracellular side of the membrane; it reads QYVTVFYGIP…WFDLTSWIKY (655 aa). N37 carries N-linked (GlcNAc...) asparagine; by host glycosylation. Residues C44 and C57 are joined by a disulfide bond. N-linked (GlcNAc...) asparagine; by host glycosylation is found at N70, N112, N122, N142, N150, N165, N191, N206, N238, N241, N248, N272, N278, N289, N300, N310, N343, N367, N400, N410, N413, N450, N464, and N468. 5 disulfide bridges follow: C101/C214, C108/C205, C113/C164, C227/C257, and C237/C249. The segment at 113-163 is V1; that stretch reads CSKTETNPGNASSTTTTKPTTTSRGLKTINETDPCIKNDSCTGLGEEEIMQ. Positions 164–205 are V2; that stretch reads CNFSMTGLRRDELKQYKDTWYSEDLECNNTRKYTSRCYIRTC. Residues 305–337 are V3; it reads CKRPGNKTVVPIRTVSGLLFHSQPINKRPRQAW. C305 and C338 form a disulfide bridge. Disulfide bonds link C392–C449 and C399–C422. Residues 399–422 form a V4 region; the sequence is CNMTWFLNWVENKTNTTRRNYAPC. Positions 465 to 471 are V5; it reads STTNISV. Positions 514-534 are fusion peptide; sequence GVMVLGFLGFLAMAGSAMGAT. The tract at residues 577-593 is immunosuppression; sequence LQARVTAIEKYLKDQAQ. 3 N-linked (GlcNAc...) asparagine; by host glycosylation sites follow: N613, N622, and N638. Residues 626-647 are a coiled coil; sequence QQWEKQVHFLDANITALLEEAQ. The MPER; binding to GalCer stretch occupies residues 659-680; it reads KINSWDVFGNWFDLTSWIKYIH. A helical membrane pass occupies residues 679–699; it reads IHLGLYIVAGLVVLRIVVYIV. Topologically, residues 700-859 are cytoplasmic; sequence QMLARLRKGY…IRQGLELTLL (160 aa). Residues 709-712 carry the YXXV motif; contains endocytosis signal motif; sequence YRPV. Residues 715 to 744 form a disordered region; it reads SPPSYTQQIPIRKDRGQPANEETEEGGGND. A lipid anchor (S-palmitoyl cysteine; by host) is attached at C775. Residues 858–859 carry the Di-leucine internalization motif motif; the sequence is LL.

In terms of assembly, the mature envelope protein (Env) consists of a homotrimer of non-covalently associated gp120-gp41 heterodimers. The resulting complex protrudes from the virus surface as a spike. There seems to be as few as 10 spikes on the average virion. Interacts with human CD4, CCR5 and CXCR4, to form a P4HB/PDI-CD4-CXCR4-gp120 complex. Gp120 also interacts with the C-type lectins CD209/DC-SIGN and CLEC4M/DC-SIGNR (collectively referred to as DC-SIGN(R)). Gp120 and gp41 interact with GalCer. The mature envelope protein (Env) consists of a homotrimer of non-covalently associated gp120-gp41 heterodimers. The resulting complex protrudes from the virus surface as a spike. There seems to be as few as 10 spikes on the average virion. In terms of processing, specific enzymatic cleavages in vivo yield mature proteins. Envelope glycoproteins are synthesized as an inactive precursor that is heavily N-glycosylated and processed likely by host cell furin in the Golgi to yield the mature SU and TM proteins. The cleavage site between SU and TM requires the minimal sequence [KR]-X-[KR]-R. Palmitoylation of the transmembrane protein and of Env polyprotein (prior to its proteolytic cleavage) is essential for their association with host cell membrane lipid rafts. Palmitoylation is therefore required for envelope trafficking to classical lipid rafts, but not for viral replication.

The protein resides in the virion membrane. It localises to the host cell membrane. It is found in the host endosome membrane. Its function is as follows. The surface protein gp120 (SU) attaches the virus to the host lymphoid cell by binding to the primary receptor CD4. This interaction induces a structural rearrangement creating a high affinity binding site for a chemokine coreceptor like CXCR4 and/or CCR5. This peculiar 2 stage receptor-interaction strategy allows gp120 to maintain the highly conserved coreceptor-binding site in a cryptic conformation, protected from neutralizing antibodies. Since CD4 also displays a binding site for the disulfide-isomerase P4HB/PDI, a P4HB/PDI-CD4-CXCR4-gp120 complex may form. In that complex, P4HB/PDI could reach and reduce gp120 disulfide bonds, causing major conformational changes in gp120. TXN, another PDI family member could also be involved in disulfide rearrangements in Env during fusion. These changes are transmitted to the transmembrane protein gp41 and are thought to activate its fusogenic potential by unmasking its fusion peptide. The surface protein gp120 is a ligand for CD209/DC-SIGN and CLEC4M/DC-SIGNR, which are respectively found on dendritic cells (DCs), and on endothelial cells of liver sinusoids and lymph node sinuses. These interactions allow capture of viral particles at mucosal surfaces by these cells and subsequent transmission to permissive cells. DCs are professional antigen presenting cells, critical for host immunity by inducing specific immune responses against a broad variety of pathogens. They act as sentinels in various tissues where they take up antigen, process it, and present it to T-cells following migration to lymphoid organs. HIV subverts the migration properties of dendritic cells to gain access to CD4+ T-cells in lymph nodes. Virus transmission to permissive T-cells occurs either in trans (without DCs infection, through viral capture and transmission), or in cis (following DCs productive infection, through the usual CD4-gp120 interaction), thereby inducing a robust infection. In trans infection, bound virions remain infectious over days and it is proposed that they are not degraded, but protected in non-lysosomal acidic organelles within the DCs close to the cell membrane thus contributing to the viral infectious potential during DCs' migration from the periphery to the lymphoid tissues. On arrival at lymphoid tissues, intact virions recycle back to DCs' cell surface allowing virus transmission to CD4+ T-cells. Virion capture also seems to lead to MHC-II-restricted viral antigen presentation, and probably to the activation of HIV-specific CD4+ cells. In terms of biological role, the transmembrane protein gp41 (TM) acts as a class I viral fusion protein. Under the current model, the protein has at least 3 conformational states: pre-fusion native state, pre-hairpin intermediate state, and post-fusion hairpin state. During fusion of viral and target intracellular membranes, the coiled coil regions (heptad repeats) assume a trimer-of-hairpins structure, positioning the fusion peptide in close proximity to the C-terminal region of the ectodomain. The formation of this structure appears to drive apposition and subsequent fusion of viral and target cell membranes. Complete fusion occurs in host cell endosomes and is dynamin-dependent, however some lipid transfer might occur at the plasma membrane. The virus undergoes clathrin-dependent internalization long before endosomal fusion, thus minimizing the surface exposure of conserved viral epitopes during fusion and reducing the efficacy of inhibitors targeting these epitopes. Membranes fusion leads to delivery of the nucleocapsid into the cytoplasm. Functionally, the envelope glycoprotein gp160 precursor down-modulates cell surface CD4 antigen by interacting with it in the endoplasmic reticulum and blocking its transport to the cell surface. Its function is as follows. The gp120-gp41 heterodimer seems to contribute to T-cell depletion during HIV-1 infection. The envelope glycoproteins expressed on the surface of infected cells induce apoptosis through an interaction with uninfected cells expressing the receptor (CD4) and the coreceptors CXCR4 or CCR5. This type of bystander killing may be obtained by at least three distinct mechanisms. First, the interaction between the 2 cells can induce cellular fusion followed by nuclear fusion within the syncytium. Syncytia are condemned to die from apoptosis. Second, the 2 interacting cells may not fuse entirely and simply exchange plasma membrane lipids, after a sort of hemifusion process, followed by rapid death. Third, it is possible that virus-infected cells, on the point of undergoing apoptosis, fuse with CD4-expressing cells, in which case apoptosis is rapidly transmitted from one cell to the other and thus occurs in a sort of contagious fashion. The gp120-gp41 heterodimer allows rapid transcytosis of the virus through CD4 negative cells such as simple epithelial monolayers of the intestinal, rectal and endocervical epithelial barriers. Both gp120 and gp41 specifically recognize glycosphingolipids galactosyl-ceramide (GalCer) or 3' sulfo-galactosyl-ceramide (GalS) present in the lipid rafts structures of epithelial cells. Binding to these alternative receptors allows the rapid transcytosis of the virus through the epithelial cells. This transcytotic vesicle-mediated transport of virions from the apical side to the basolateral side of the epithelial cells does not involve infection of the cells themselves. This Human immunodeficiency virus type 2 subtype B (isolate D205) (HIV-2) protein is Envelope glycoprotein gp160 (env).